Consider the following 445-residue polypeptide: Gamma-glutamyl phosphate reductase (445 aa).

Belongs to the gamma-glutamyl phosphate reductase family.

It is found in the cytoplasm. It carries out the reaction L-glutamate 5-semialdehyde + phosphate + NADP(+) = L-glutamyl 5-phosphate + NADPH + H(+). The protein operates within amino-acid biosynthesis; L-proline biosynthesis; L-glutamate 5-semialdehyde from L-glutamate: step 2/2. In terms of biological role, catalyzes the NADPH-dependent reduction of L-glutamate 5-phosphate into L-glutamate 5-semialdehyde and phosphate. The product spontaneously undergoes cyclization to form 1-pyrroline-5-carboxylate. The chain is Gamma-glutamyl phosphate reductase from Persephonella marina (strain DSM 14350 / EX-H1).